The sequence spans 6713 residues: Extracellular matrix-binding protein EbhA (6713 aa).

FIVAR domains follow at residues 1 to 58 (MGNL…VEQA), 126 to 184 (AMGQ…VTAA), 252 to 310 (AMKG…ITQA), 378 to 436 (QMGN…VEAA), 504 to 562 (AMAN…VENA), 630 to 688 (AMGT…INQI), 756 to 814 (AMGQ…VDRA), 882 to 940 (AMNS…VDNA), 1008 to 1066 (AMGA…INDM), 1134 to 1192 (AMTA…VNSA), 1260 to 1318 (AMKG…ITQA), 1386 to 1444 (AMHS…VEQA), 1512 to 1570 (AMGQ…VERA), 1638 to 1696 (AMTA…VTNA), 1764 to 1822 (AMKG…INQA), 1890 to 1948 (AMTN…VETA), 2142 to 2200 (AMNQ…INQK), 2268 to 2325 (AMGN…VQAA), 2393 to 2451 (AMGQ…VEAA), 2519 to 2577 (AMQR…VEQA), 2645 to 2703 (AMDQ…VTAA), 2771 to 2829 (AMNQ…VTQA), 2897 to 2955 (AMER…VEAA), 3023 to 3081 (AMGN…VEAA), 3149 to 3207 (AMDK…INQA), 3275 to 3333 (AMGN…VEQA), 3401 to 3459 (AMTQ…ITAA), 3527 to 3585 (AMTQ…IQQA), 3653 to 3711 (AMTN…VEQA), 3779 to 3837 (AMTQ…VAQA), 3905 to 3963 (AMGT…VTKA), 4031 to 4089 (AMGN…ITRA), 4157 to 4218 (AMDQ…ITNE), 4283 to 4341 (AMEL…VNGA), 4409 to 4467 (AMGN…VEQA), 4535 to 4592 (AMHG…INQV), 4660 to 4718 (LMDA…VSSA), 4786 to 4844 (AMKA…IDQA), 4912 to 4970 (AMEA…VEQL), 5038 to 5096 (AMQA…VEQL), 5164 to 5222 (AMET…VEQA), 5290 to 5344 (SMDQ…VDQA), 5412 to 5471 (AMDQ…VIKL), and 5666 to 5722 (AMET…INGA). Residues 6518–6540 (VIKNAIGVVGISGLLASFWFFIA) traverse the membrane as a helical segment. Positions 6616–6713 (RRKEDEEDVE…KKKKSKKNKK (98 aa)) are disordered. Composition is skewed to basic and acidic residues over residues 6631 to 6641 (TDEKVLKDNEH) and 6680 to 6690 (QKDNQSKDKKS). A compositionally biased stretch (basic residues) spans 6695–6713 (TSKKVAAKKKKKKSKKNKK).

Its subcellular location is the cell membrane. The polypeptide is Extracellular matrix-binding protein EbhA (ebhA) (Staphylococcus aureus (strain Mu3 / ATCC 700698)).